The chain runs to 167 residues: uncharacterized protein (167 aa).

A disordered region spans residues 95-114; that stretch reads AHSLHHQSHQSDVQVHAKGN.

This is an uncharacterized protein from Haemophilus influenzae (Bacteriophage HP1).